Here is a 428-residue protein sequence, read N- to C-terminus: GTPase Obg (428 aa).

The 158-residue stretch at 1–158 (MFVDQVKVYV…RYIVLELKVL (158 aa)) folds into the Obg domain. The tract at residues 117–143 (AKGGRGGRGNTRFATPANPAPQLSEHG) is disordered. The region spanning 159 to 329 (ADVGLVGFPS…LLFEVANQLE (171 aa)) is the OBG-type G domain. Residues 165 to 172 (GFPSVGKS), 190 to 194 (FTTLV), 212 to 215 (DLPG), 282 to 285 (NKMD), and 310 to 312 (SAV) contribute to the GTP site. Residues Ser-172 and Thr-192 each contribute to the Mg(2+) site. Residues 350–428 (TMEDEEIPFN…LLEFEFEFID (79 aa)) enclose the OCT domain.

It belongs to the TRAFAC class OBG-HflX-like GTPase superfamily. OBG GTPase family. In terms of assembly, monomer. Requires Mg(2+) as cofactor.

The protein localises to the cytoplasm. Functionally, an essential GTPase which binds GTP, GDP and possibly (p)ppGpp with moderate affinity, with high nucleotide exchange rates and a fairly low GTP hydrolysis rate. Plays a role in control of the cell cycle, stress response, ribosome biogenesis and in those bacteria that undergo differentiation, in morphogenesis control. The sequence is that of GTPase Obg from Bacillus velezensis (strain DSM 23117 / BGSC 10A6 / LMG 26770 / FZB42) (Bacillus amyloliquefaciens subsp. plantarum).